A 220-amino-acid polypeptide reads, in one-letter code: Protein-L-isoaspartate O-methyltransferase (220 aa).

The active site involves Ser64.

It belongs to the methyltransferase superfamily. L-isoaspartyl/D-aspartyl protein methyltransferase family.

The protein resides in the cytoplasm. The enzyme catalyses [protein]-L-isoaspartate + S-adenosyl-L-methionine = [protein]-L-isoaspartate alpha-methyl ester + S-adenosyl-L-homocysteine. Its function is as follows. Catalyzes the methyl esterification of L-isoaspartyl residues in peptides and proteins that result from spontaneous decomposition of normal L-aspartyl and L-asparaginyl residues. It plays a role in the repair and/or degradation of damaged proteins. The sequence is that of Protein-L-isoaspartate O-methyltransferase from Methanoculleus marisnigri (strain ATCC 35101 / DSM 1498 / JR1).